We begin with the raw amino-acid sequence, 496 residues long: Alanine aminotransferase 1 (496 aa).

An N-acetylalanine modification is found at Ala2. Thr22 is modified (phosphothreonine). An N6-(pyridoxal phosphate)lysine modification is found at Lys314.

Belongs to the class-I pyridoxal-phosphate-dependent aminotransferase family. Alanine aminotransferase subfamily. Homodimer. It depends on pyridoxal 5'-phosphate as a cofactor. In terms of tissue distribution, mainly expressed in liver, intestine, colon and white adipose tissue.

The protein localises to the cytoplasm. It carries out the reaction L-alanine + 2-oxoglutarate = pyruvate + L-glutamate. Its pathway is amino-acid degradation; L-alanine degradation via transaminase pathway; pyruvate from L-alanine: step 1/1. Its function is as follows. Catalyzes the reversible transamination between alanine and 2-oxoglutarate to form pyruvate and glutamate. Participates in cellular nitrogen metabolism and also in liver gluconeogenesis starting with precursors transported from skeletal muscles. This is Alanine aminotransferase 1 (Gpt) from Mus musculus (Mouse).